The primary structure comprises 325 residues: Phosphate import ATP-binding protein PstB (325 aa).

Positions 79–320 (IDNYNLWYSN…PNNEKTKDYI (242 aa)) constitute an ABC transporter domain. ATP is bound at residue 111–118 (GPSGCGKS).

It belongs to the ABC transporter superfamily. Phosphate importer (TC 3.A.1.7) family. As to quaternary structure, the complex is composed of two ATP-binding proteins (PstB), two transmembrane proteins (PstC and PstA) and a solute-binding protein (PstS).

Its subcellular location is the cell membrane. It carries out the reaction phosphate(out) + ATP + H2O = ADP + 2 phosphate(in) + H(+). In terms of biological role, part of the ABC transporter complex PstSACB involved in phosphate import. Responsible for energy coupling to the transport system. The protein is Phosphate import ATP-binding protein PstB of Mycoplasmoides gallisepticum (strain R(low / passage 15 / clone 2)) (Mycoplasma gallisepticum).